Reading from the N-terminus, the 260-residue chain is Deoxycytidine kinase (260 aa).

Serine 11 and serine 15 each carry phosphoserine; by CK1. 28 to 36 is an ATP binding site; sequence GNIAAGKST. Residue glutamate 53 participates in substrate binding. Threonine 72 carries the post-translational modification Phosphothreonine; by CK1. A Phosphoserine; by CK1 modification is found at serine 74. Substrate is bound by residues tyrosine 86 and glutamine 97. Catalysis depends on glutamate 127, which acts as the Proton acceptor. Substrate contacts are provided by arginine 128 and aspartate 133. 188–192 lines the ATP pocket; sequence RIYLR. Glutamate 197 is a substrate binding site. 240 to 242 is a binding site for ATP; the sequence is EDF.

This sequence belongs to the DCK/DGK family. In terms of assembly, homodimer. Post-translationally, phosphorylated and activated in vitro upon phosphorylation at Ser-74 by CSNK1D/CK1.

The protein localises to the nucleus. The catalysed reaction is 2'-deoxycytidine + a ribonucleoside 5'-triphosphate = dCMP + a ribonucleoside 5'-diphosphate + H(+). It catalyses the reaction 2'-deoxyadenosine + ATP = dAMP + ADP + H(+). It carries out the reaction 2'-deoxyguanosine + ATP = dGMP + ADP + H(+). Functionally, phosphorylates the deoxyribonucleosides deoxycytidine, deoxyguanosine and deoxyadenosine. This chain is Deoxycytidine kinase (DCK), found in Bos taurus (Bovine).